A 223-amino-acid chain; its full sequence is Ribose-5-phosphate isomerase A (223 aa).

Substrate-binding positions include 32-35, 85-88, and 98-101; these read TGST, DGAD, and KGGG. Residue E107 is the Proton acceptor of the active site. K125 is a binding site for substrate.

This sequence belongs to the ribose 5-phosphate isomerase family. Homodimer.

It carries out the reaction aldehydo-D-ribose 5-phosphate = D-ribulose 5-phosphate. Its pathway is carbohydrate degradation; pentose phosphate pathway; D-ribose 5-phosphate from D-ribulose 5-phosphate (non-oxidative stage): step 1/1. Catalyzes the reversible conversion of ribose-5-phosphate to ribulose 5-phosphate. The polypeptide is Ribose-5-phosphate isomerase A (Pseudomonas syringae pv. tomato (strain ATCC BAA-871 / DC3000)).